The following is a 411-amino-acid chain: Serine hydroxymethyltransferase (411 aa).

120–122 (GHL) contacts (6S)-5,6,7,8-tetrahydrofolate. Residue Lys225 is modified to N6-(pyridoxal phosphate)lysine. Position 350 to 352 (350 to 352 (SPF)) interacts with (6S)-5,6,7,8-tetrahydrofolate.

The protein belongs to the SHMT family. Homodimer. It depends on pyridoxal 5'-phosphate as a cofactor.

It is found in the cytoplasm. The enzyme catalyses (6R)-5,10-methylene-5,6,7,8-tetrahydrofolate + glycine + H2O = (6S)-5,6,7,8-tetrahydrofolate + L-serine. Its pathway is one-carbon metabolism; tetrahydrofolate interconversion. The protein operates within amino-acid biosynthesis; glycine biosynthesis; glycine from L-serine: step 1/1. Functionally, catalyzes the reversible interconversion of serine and glycine with tetrahydrofolate (THF) serving as the one-carbon carrier. This reaction serves as the major source of one-carbon groups required for the biosynthesis of purines, thymidylate, methionine, and other important biomolecules. Also exhibits THF-independent aldolase activity toward beta-hydroxyamino acids, producing glycine and aldehydes, via a retro-aldol mechanism. This Lactobacillus gasseri (strain ATCC 33323 / DSM 20243 / BCRC 14619 / CIP 102991 / JCM 1131 / KCTC 3163 / NCIMB 11718 / NCTC 13722 / AM63) protein is Serine hydroxymethyltransferase.